The primary structure comprises 572 residues: Myb-like protein Y (572 aa).

Residues 196–211 (QSQSQLPTATNNNNKQ) show a composition bias toward polar residues. The disordered stretch occupies residues 196–283 (QSQSQLPTAT…NNNNNNNNNE (88 aa)). 2 stretches are compositionally biased toward low complexity: residues 222–237 (TATATATTTATTTTTT) and 260–281 (NDNNNNTNNNNNNNNNNNNNNN). Positions 311 to 360 (PWTVEDQKKLEDALTKYPPSRFSSVSRWQMVSKELGISPKAVALRYNQML) constitute a Myb-like domain. The segment at 367-456 (KPSLQQQQQQ…TTVTPNMTTP (90 aa)) is disordered. Composition is skewed to low complexity over residues 371 to 392 (QQQQQQQQQQQQQPTTTTTTTT) and 414 to 425 (SSFSSPSSSSKE). Residues 426 to 435 (SPNKKEKTTH) are compositionally biased toward basic and acidic residues. Low complexity predominate over residues 436-455 (DTTTTTNTATTTTVTPNMTT).

The sequence is that of Myb-like protein Y (mybY) from Dictyostelium discoideum (Social amoeba).